The primary structure comprises 330 residues: Beta-hexosaminidase (330 aa).

Substrate is bound by residues D62, R70, R130, and K160 to H161. H173 functions as the Proton donor/acceptor in the catalytic mechanism. Catalysis depends on D242, which acts as the Nucleophile.

This sequence belongs to the glycosyl hydrolase 3 family. NagZ subfamily.

The protein resides in the cytoplasm. It catalyses the reaction Hydrolysis of terminal non-reducing N-acetyl-D-hexosamine residues in N-acetyl-beta-D-hexosaminides.. It participates in cell wall biogenesis; peptidoglycan recycling. In terms of biological role, plays a role in peptidoglycan recycling by cleaving the terminal beta-1,4-linked N-acetylglucosamine (GlcNAc) from peptide-linked peptidoglycan fragments, giving rise to free GlcNAc, anhydro-N-acetylmuramic acid and anhydro-N-acetylmuramic acid-linked peptides. The polypeptide is Beta-hexosaminidase (Vibrio cholerae serotype O1 (strain ATCC 39541 / Classical Ogawa 395 / O395)).